The chain runs to 105 residues: Nucleoid-associated protein Sca_0120 (105 aa).

A disordered region spans residues 1-36 (MRGGGNMQQMMKQMQKMQKKMAEEQEKLKDEKVEGS). Residues 7–16 (MQQMMKQMQK) are compositionally biased toward low complexity. Over residues 20 to 34 (KMAEEQEKLKDEKVE) the composition is skewed to basic and acidic residues.

Belongs to the YbaB/EbfC family. As to quaternary structure, homodimer.

Its subcellular location is the cytoplasm. It is found in the nucleoid. Its function is as follows. Binds to DNA and alters its conformation. May be involved in regulation of gene expression, nucleoid organization and DNA protection. This Staphylococcus carnosus (strain TM300) protein is Nucleoid-associated protein Sca_0120.